The following is a 414-amino-acid chain: Probable tRNA pseudouridine synthase D (414 aa).

Aspartate 90 (nucleophile) is an active-site residue. Positions 162 to 382 constitute a TRUD domain; the sequence is GFPNFFGVQR…SSGDYRIISA (221 aa).

It belongs to the pseudouridine synthase TruD family.

It carries out the reaction uridine(13) in tRNA = pseudouridine(13) in tRNA. Its function is as follows. Could be responsible for synthesis of pseudouridine from uracil-13 in transfer RNAs. This is Probable tRNA pseudouridine synthase D from Picrophilus torridus (strain ATCC 700027 / DSM 9790 / JCM 10055 / NBRC 100828 / KAW 2/3).